The following is a 145-amino-acid chain: Large ribosomal subunit protein mL43 (145 aa).

This sequence belongs to the mitochondrion-specific ribosomal protein mL43 family. Component of the mitochondrial large ribosomal subunit (mt-LSU). Mature yeast 74S mitochondrial ribosomes consist of a small (37S) and a large (54S) subunit. The 37S small subunit contains a 15S ribosomal RNA (15S mt-rRNA) and at least 32 different proteins. The 54S large subunit contains a 21S rRNA (21S mt-rRNA) and at least 45 different proteins.

It is found in the mitochondrion. Functionally, component of the mitochondrial ribosome (mitoribosome), a dedicated translation machinery responsible for the synthesis of mitochondrial genome-encoded proteins, including at least some of the essential transmembrane subunits of the mitochondrial respiratory chain. The mitoribosomes are attached to the mitochondrial inner membrane and translation products are cotranslationally integrated into the membrane. Also has an extraribosomal function, being essential for mitochondrial genome integrity. May interact with MHR1 to take part in the mtDNA repair mechanism. In Schizosaccharomyces pombe (strain 972 / ATCC 24843) (Fission yeast), this protein is Large ribosomal subunit protein mL43 (mrpl51).